Consider the following 419-residue polypeptide: Putative zinc metalloprotease SPs1691 (419 aa).

H18 is a Zn(2+) binding site. E19 is a catalytic residue. H22 is a Zn(2+) binding site. 4 helical membrane passes run 169–191 (LITN…ILLV), 301–323 (LAWS…FSLN), 343–365 (LESV…LIPI), and 392–411 (AYIT…AVTW). The PDZ domain maps to 175 to 274 (GPMNNFILGI…LKTVAVKPQK (100 aa)).

The protein belongs to the peptidase M50B family. Requires Zn(2+) as cofactor.

Its subcellular location is the cell membrane. This Streptococcus pyogenes serotype M3 (strain SSI-1) protein is Putative zinc metalloprotease SPs1691 (eep).